The chain runs to 221 residues: Deoxyribose-phosphate aldolase (221 aa).

Residue D90 is the Proton donor/acceptor of the active site. K152 functions as the Schiff-base intermediate with acetaldehyde in the catalytic mechanism. K181 serves as the catalytic Proton donor/acceptor.

The protein belongs to the DeoC/FbaB aldolase family. DeoC type 1 subfamily.

Its subcellular location is the cytoplasm. The enzyme catalyses 2-deoxy-D-ribose 5-phosphate = D-glyceraldehyde 3-phosphate + acetaldehyde. The protein operates within carbohydrate degradation; 2-deoxy-D-ribose 1-phosphate degradation; D-glyceraldehyde 3-phosphate and acetaldehyde from 2-deoxy-alpha-D-ribose 1-phosphate: step 2/2. In terms of biological role, catalyzes a reversible aldol reaction between acetaldehyde and D-glyceraldehyde 3-phosphate to generate 2-deoxy-D-ribose 5-phosphate. In Exiguobacterium sibiricum (strain DSM 17290 / CCUG 55495 / CIP 109462 / JCM 13490 / 255-15), this protein is Deoxyribose-phosphate aldolase.